The chain runs to 291 residues: Probable alpha-L-glutamate ligase (291 aa).

Residues 104-287 (HQLLASQGID…VAGTIIQHLE (184 aa)) enclose the ATP-grasp domain. ATP is bound by residues Lys141, 178–179 (EF), Asp187, and 211–213 (RSN). Positions 248, 260, and 262 each coordinate Mg(2+). Mn(2+)-binding residues include Asp248, Glu260, and Asn262.

It belongs to the RimK family. Mg(2+) serves as cofactor. Mn(2+) is required as a cofactor.

The chain is Probable alpha-L-glutamate ligase from Xanthomonas campestris pv. campestris (strain 8004).